Reading from the N-terminus, the 467-residue chain is Glutamine synthetase (467 aa).

A GS beta-grasp domain is found at 14-98 (EEVEYVDIRF…VHCNVVEPDT (85 aa)). One can recognise a GS catalytic domain in the interval 106-467 (PRGAAVKAEA…PVEYQMYYSC (362 aa)). Mg(2+) is bound by residues E131 and E133. D209 contacts ATP. Residues E214 and E221 each coordinate Mg(2+). L-glutamate-binding positions include 265–266 (NG) and G266. H270 serves as a coordination point for Mg(2+). ATP contacts are provided by residues 272–274 (NMS) and S274. Residues R320, E326, and R338 each contribute to the L-glutamate site. Residues R338 and R343 each contribute to the ATP site. Residue E356 participates in Mg(2+) binding. R358 provides a ligand contact to L-glutamate. Y396 is subject to O-AMP-tyrosine.

The protein belongs to the glutamine synthetase family. Oligomer of 12 subunits arranged in the form of two hexameric ring. Mg(2+) serves as cofactor.

The protein resides in the cytoplasm. It carries out the reaction L-glutamate + NH4(+) + ATP = L-glutamine + ADP + phosphate + H(+). Its activity is regulated as follows. The activity of this enzyme could be controlled by adenylation under conditions of abundant glutamine. Its function is as follows. Catalyzes the ATP-dependent biosynthesis of glutamine from glutamate and ammonia. This Cereibacter sphaeroides (Rhodobacter sphaeroides) protein is Glutamine synthetase.